A 564-amino-acid polypeptide reads, in one-letter code: Oxalyl-CoA decarboxylase (564 aa).

Substrate-binding residues include isoleucine 32 and tyrosine 118. ADP contacts are provided by arginine 158 and lysine 220. 261-265 (AAARS) is a binding site for substrate. ADP contacts are provided by arginine 280, aspartate 302, and isoleucine 322. Residue asparagine 355 coordinates substrate. Thiamine diphosphate is bound by residues tyrosine 372 and 396-398 (ANT). 403–404 (RN) provides a ligand contact to substrate. Thiamine diphosphate is bound at residue 421–423 (GVM). Aspartate 447 contributes to the Mg(2+) binding site. 448-449 (SA) is a thiamine diphosphate binding site. Residues asparagine 474 and glycine 476 each contribute to the Mg(2+) site. A thiamine diphosphate-binding site is contributed by tyrosine 478. Residue 550–552 (SGH) participates in substrate binding.

It belongs to the TPP enzyme family. Homotetramer; dimer of dimers. Mg(2+) is required as a cofactor. It depends on thiamine diphosphate as a cofactor.

It catalyses the reaction oxalyl-CoA + H(+) = formyl-CoA + CO2. Its pathway is metabolic intermediate degradation; oxalate degradation; CO(2) and formate from oxalate: step 2/2. In terms of biological role, involved in the catabolism of oxalate and in the adapatation to low pH via the induction of the oxalate-dependent acid tolerance response (ATR). Catalyzes the decarboxylation of oxalyl-CoA to yield carbon dioxide and formyl-CoA. The protein is Oxalyl-CoA decarboxylase (oxc) of Escherichia coli O157:H7.